The primary structure comprises 192 residues: Ion-translocating oxidoreductase complex subunit B (192 aa).

A hydrophobic region spans residues 1–26; the sequence is MNTIWIAVGALALLGLVFGAILGYAS. Residues 32-91 enclose the 4Fe-4S domain; the sequence is EDDPVVEKIDAILPQSQCGQCGYPGCRPYAEAVGLQGEKINRCAPGGEAVMLKIAELLNV. Residues C49, C52, C57, C74, C117, C120, C123, C127, C147, C150, C153, and C157 each contribute to the [4Fe-4S] cluster site. 4Fe-4S ferredoxin-type domains follow at residues 108–137 and 138–167; these read MLAV…GATR and AMHT…LRPV.

The protein belongs to the 4Fe4S bacterial-type ferredoxin family. RnfB subfamily. In terms of assembly, the complex is composed of six subunits: RsxA, RsxB, RsxC, RsxD, RsxE and RsxG. [4Fe-4S] cluster is required as a cofactor.

Its subcellular location is the cell inner membrane. Part of a membrane-bound complex that couples electron transfer with translocation of ions across the membrane. Required to maintain the reduced state of SoxR. This chain is Ion-translocating oxidoreductase complex subunit B, found in Salmonella newport (strain SL254).